Here is a 50-residue protein sequence, read N- to C-terminus: Large ribosomal subunit protein bL33A (50 aa).

Belongs to the bacterial ribosomal protein bL33 family.

This is Large ribosomal subunit protein bL33A from Streptococcus thermophilus (strain CNRZ 1066).